A 645-amino-acid chain; its full sequence is Chaperone protein DnaK (645 aa).

Phosphothreonine; by autocatalysis is present on T199. 2 disordered regions span residues 509–530 and 615–645; these read GALS…AEED and EAGA…EVKE. The segment covering 518–530 has biased composition (basic and acidic residues); that stretch reads QMQKDAEANAEED. The segment covering 615 to 626 has biased composition (low complexity); sequence EAGADAAGAAGA. Residues 631–645 show a composition bias toward acidic residues; it reads GDDDDAIDAEFEVKE.

Belongs to the heat shock protein 70 family.

In terms of biological role, acts as a chaperone. The protein is Chaperone protein DnaK of Rhodopirellula baltica (strain DSM 10527 / NCIMB 13988 / SH1).